The following is a 533-amino-acid chain: NEDD8-activating enzyme E1 regulatory subunit (533 aa).

The tract at residues 330 to 343 (DMIADSDKFIKLQN) is interaction with uba3.

The protein belongs to the ubiquitin-activating E1 family. ULA1 subfamily. Heterodimer of uba3 and nae1. The complex binds nedd8 and ube2m.

It participates in protein modification; protein neddylation. Regulatory subunit of the dimeric uba3-nae1 E1 enzyme. E1 activates nedd8 by first adenylating its C-terminal glycine residue with ATP, thereafter linking this residue to the side chain of the catalytic cysteine, yielding a nedd8-uba3 thioester and free AMP. E1 finally transfers nedd8 to the catalytic cysteine of ube2m. The covalent attachment of nedd8 to target proteins is known as 'neddylation' and the process is involved in the regulation of cell growth, viability and development. This is NEDD8-activating enzyme E1 regulatory subunit (nae1) from Danio rerio (Zebrafish).